We begin with the raw amino-acid sequence, 62 residues long: Photosystem II reaction center protein Z (62 aa).

Transmembrane regions (helical) follow at residues 8–28 and 41–61; these read ALFALIATSSILLISVPIVFA and FSGTSLWIGLVFLVAILNSLI.

The protein belongs to the PsbZ family. PSII is composed of 1 copy each of membrane proteins PsbA, PsbB, PsbC, PsbD, PsbE, PsbF, PsbH, PsbI, PsbJ, PsbK, PsbL, PsbM, PsbT, PsbY, PsbZ, Psb30/Ycf12, at least 3 peripheral proteins of the oxygen-evolving complex and a large number of cofactors. It forms dimeric complexes.

Its subcellular location is the plastid. It is found in the chloroplast thylakoid membrane. May control the interaction of photosystem II (PSII) cores with the light-harvesting antenna, regulates electron flow through the 2 photosystem reaction centers. PSII is a light-driven water plastoquinone oxidoreductase, using light energy to abstract electrons from H(2)O, generating a proton gradient subsequently used for ATP formation. This is Photosystem II reaction center protein Z from Drimys granadensis.